Here is a 139-residue protein sequence, read N- to C-terminus: D-ribose pyranase (139 aa).

His-20 serves as the catalytic Proton donor. Residues Asp-28, His-106, and 128-130 (YAN) contribute to the substrate site.

The protein belongs to the RbsD / FucU family. RbsD subfamily. As to quaternary structure, homodecamer.

Its subcellular location is the cytoplasm. It catalyses the reaction beta-D-ribopyranose = beta-D-ribofuranose. Its pathway is carbohydrate metabolism; D-ribose degradation; D-ribose 5-phosphate from beta-D-ribopyranose: step 1/2. Catalyzes the interconversion of beta-pyran and beta-furan forms of D-ribose. This is D-ribose pyranase from Vibrio campbellii (strain ATCC BAA-1116).